The chain runs to 164 residues: MQITLARIDDRLIHGQVTTVWSKVANAQRIIICNDDVFNDEVRRTLLRQAAPPGMKVNVVSLEKAVAVYHNPQYQDETVFYLFTNPHDVLTMVRQGVQIATLNIGGMAWRPGKKQLTKAVSLDPQDIQAFRELDKLGVKLDLRVVASDPSVNILDKINETAFCE.

The PTS EIIB type-4 domain occupies 1-164; it reads MQITLARIDD…DKINETAFCE (164 aa). The active-site Pros-phosphohistidine intermediate is His14. Residue His14 is modified to Phosphohistidine; by EIIA.

In terms of assembly, dimer of dimers.

It localises to the cytoplasm. The catalysed reaction is keto-L-sorbose(out) + N(pros)-phospho-L-histidyl-[protein] = L-sorbose 1-phosphate(in) + L-histidyl-[protein]. Its function is as follows. The phosphoenolpyruvate-dependent sugar phosphotransferase system (PTS), a major carbohydrate active transport system, catalyzes the phosphorylation of incoming sugar substrates concomitant with their translocation across the cell membrane. The enzyme II SorABFM PTS system is involved in L-sorbose transport. This is PTS system sorbose-specific EIIB component from Klebsiella pneumoniae.